A 260-amino-acid polypeptide reads, in one-letter code: Collagenase (260 aa).

The signal sequence occupies residues 1-16 (MKFLLVFALALATTSA). The propeptide occupies 17–30 (FQHPASIFELREGR). One can recognise a Peptidase S1 domain in the interval 31 to 257 (IINGYEAYTG…YMDWIQQNTG (227 aa)). Cysteine 60 and cysteine 76 are joined by a disulfide. Catalysis depends on charge relay system residues histidine 75 and aspartate 118. 2 disulfides stabilise this stretch: cysteine 181-cysteine 196 and cysteine 206-cysteine 234. Serine 210 functions as the Charge relay system in the catalytic mechanism.

Belongs to the peptidase S1 family.

It is found in the secreted. It carries out the reaction Hydrolysis of proteins including native collagen at Xaa-|-Ala bond leaving an N-terminal (75%) and a C-terminal (25%) fragment.. Inhibited by diisopropylfluorophosphate. In terms of biological role, this enzyme is a serine protease capable of degrading the native triple helix of collagen. Also cleaves the B chain of insulin at the 15-Leu-|-Try-16 and 22-Arg-|-Gly-23 bonds. Hydrolyzes casein, but not Px-Pro-Leu-Gly-Pro-DArg, BzArgNHPh, AcTyrNHPh, 2-naphthyl phosphate, 2-naphthyl butyrate, 2-naphthyl caprylate, 2-naphthyl myristate, L-leucine 2-2-naphthylamide, L-valine 2-naphthylamide, L-cysteine 2-naphthylamide or L-glutarylphenylalanine 2-naphthylamide. This is Collagenase from Hypoderma lineatum (Early cattle grub).